A 93-amino-acid chain; its full sequence is Small ribosomal subunit protein uS19 (93 aa).

It belongs to the universal ribosomal protein uS19 family.

Functionally, protein S19 forms a complex with S13 that binds strongly to the 16S ribosomal RNA. In Frankia alni (strain DSM 45986 / CECT 9034 / ACN14a), this protein is Small ribosomal subunit protein uS19.